We begin with the raw amino-acid sequence, 232 residues long: Proteasome subunit alpha type-2 (232 aa).

Belongs to the peptidase T1A family. As to quaternary structure, the 26S proteasome consists of a 20S proteasome core and two 19S regulatory subunits. The 20S proteasome core is composed of 28 subunits that are arranged in four stacked rings, resulting in a barrel-shaped structure. The two end rings are each formed by seven alpha subunits, and the two central rings are each formed by seven beta subunits. The catalytic chamber with the active sites is on the inside of the barrel.

The protein resides in the cytoplasm. It localises to the nucleus. The proteasome is a multicatalytic proteinase complex which is characterized by its ability to cleave peptides with Arg, Phe, Tyr, Leu, and Glu adjacent to the leaving group at neutral or slightly basic pH. The proteasome has an ATP-dependent proteolytic activity. This Dictyostelium discoideum (Social amoeba) protein is Proteasome subunit alpha type-2 (psmA2).